Reading from the N-terminus, the 163-residue chain is Ribonuclease H (163 aa).

The RNase H type-1 domain occupies Thr16 to Thr157. Mg(2+) contacts are provided by Asp25, Glu63, Asp85, and Asp149.

This sequence belongs to the RNase H family. In terms of assembly, monomer. The cofactor is Mg(2+).

It is found in the cytoplasm. The catalysed reaction is Endonucleolytic cleavage to 5'-phosphomonoester.. In terms of biological role, endonuclease that specifically degrades the RNA of RNA-DNA hybrids. The sequence is that of Ribonuclease H from Pelobacter propionicus (strain DSM 2379 / NBRC 103807 / OttBd1).